The chain runs to 607 residues: UvrABC system protein C (607 aa).

Residues 16–94 (GRPGVYRMFD…IKEWRPPYNI (79 aa)) enclose the GIY-YIG domain. The 36-residue stretch at 203–238 (HALTNELSTAMEEAAINLEFERAAELRDQIALLRRV) folds into the UVR domain.

Belongs to the UvrC family. Interacts with UvrB in an incision complex.

It localises to the cytoplasm. Its function is as follows. The UvrABC repair system catalyzes the recognition and processing of DNA lesions. UvrC both incises the 5' and 3' sides of the lesion. The N-terminal half is responsible for the 3' incision and the C-terminal half is responsible for the 5' incision. This chain is UvrABC system protein C, found in Pseudomonas fluorescens (strain Pf0-1).